The sequence spans 986 residues: LRR receptor-like serine/threonine-protein kinase ER2 (986 aa).

Positions 1–21 are cleaved as a signal peptide; it reads MTTTTTTRLLLAAILLAVAAA. Residues 22-581 lie on the Extracellular side of the membrane; it reads DDDGQTLLEI…VQRSSVSRSA (560 aa). N-linked (GlcNAc...) asparagine glycans are attached at residues asparagine 64 and asparagine 73. 20 LRR repeats span residues 68–89, 90–114, 116–138, 139–161, 162–186, 188–210, 211–233, 234–259, 261–280, 281–304, 306–329, 330–352, 354–377, 379–401, 402–425, 427–449, 450–472, 473–498, 500–520, and 521–545; these read AVAALNLSGLNLGGEISPAIGN, LKSVESIDLKSNELSGQIPDEIGDC, SLKTLDLSSNNLGGDIPFSISKL, KHLENLILKNNQLVGMIPSTLSQ, LPNLKILDLAQNKLNGEIPRLIYWN, VLQYLGLRSNNLEGSLSPEMCQL, TGLWYFDVKNNSLTGIIPDTIGN, CTSFQVLDLSYNRLTGEIPFNIGFLQ, ATLSLQGNNFSGPIPSVIGL, MQALAVLDLSFNQLSGPIPSILGN, TYTEKLYLQGNRLTGSIPPELGNM, STLHYLELNDNQLTGFIPPELGK, TGLFDLNLANNNLEGPIPDNISSC, NLISFNAYGNKLNGTVPRSLHKL, ESITYLNLSSNYLSGAIPIELAKM, NLDTLDLSCNMVAGPIPSAIGSL, EHLLRLNFSNNNLVGYIPAEFGN, LRSIMEIDLSSNHLGGLIPQEVGMLQ, LILLKLESNNITGDVSSLINC, and FSLNVLNVSYNNLAGIVPTDNNFSR. N-linked (GlcNAc...) asparagine glycosylation is found at asparagine 220 and asparagine 233. N-linked (GlcNAc...) asparagine glycans are attached at residues asparagine 269, asparagine 304, and asparagine 328. Residues asparagine 373, asparagine 391, and asparagine 408 are each glycosylated (N-linked (GlcNAc...) asparagine). N-linked (GlcNAc...) asparagine glycosylation is present at asparagine 456. 3 N-linked (GlcNAc...) asparagine glycosylation sites follow: asparagine 509, asparagine 527, and asparagine 542. Residues 582–602 traverse the membrane as a helical segment; the sequence is ILGIAVAGLVILLMILAAACW. Residues 603-986 are Cytoplasmic-facing; the sequence is PHWAQVPKDV…FGEVISQNTE (384 aa). The region spanning 653–934 is the Protein kinase domain; that stretch reads LSEKYIIGYG…YPDPPSKPAL (282 aa). ATP is bound by residues 659–667 and lysine 681; that span reads IGYGASSTV. Aspartate 779 serves as the catalytic Proton acceptor.

Belongs to the protein kinase superfamily. Ser/Thr protein kinase family.

It localises to the cell membrane. It catalyses the reaction L-seryl-[protein] + ATP = O-phospho-L-seryl-[protein] + ADP + H(+). It carries out the reaction L-threonyl-[protein] + ATP = O-phospho-L-threonyl-[protein] + ADP + H(+). Receptor kinase that may be involved in the regulation of cell proliferation and cell growth. The protein is LRR receptor-like serine/threonine-protein kinase ER2 of Oryza sativa subsp. japonica (Rice).